Here is a 245-residue protein sequence, read N- to C-terminus: Orotidine 5'-phosphate decarboxylase (245 aa).

Residues D22, K44, 71 to 80, T131, R192, Q201, G221, and R222 contribute to the substrate site; that span reads DLKFHDIPNT. Catalysis depends on K73, which acts as the Proton donor.

The protein belongs to the OMP decarboxylase family. Type 1 subfamily. As to quaternary structure, homodimer.

It carries out the reaction orotidine 5'-phosphate + H(+) = UMP + CO2. The protein operates within pyrimidine metabolism; UMP biosynthesis via de novo pathway; UMP from orotate: step 2/2. Functionally, catalyzes the decarboxylation of orotidine 5'-monophosphate (OMP) to uridine 5'-monophosphate (UMP). The protein is Orotidine 5'-phosphate decarboxylase of Escherichia coli O127:H6 (strain E2348/69 / EPEC).